A 117-amino-acid chain; its full sequence is NADH-ubiquinone oxidoreductase chain 3 (117 aa).

The next 3 membrane-spanning stretches (helical) occupy residues 4 to 24, 60 to 80, and 86 to 106; these read IIII…LASI, ITII…MIII, and IMIW…GLYH.

This sequence belongs to the complex I subunit 3 family.

The protein resides in the mitochondrion membrane. The catalysed reaction is a ubiquinone + NADH + 5 H(+)(in) = a ubiquinol + NAD(+) + 4 H(+)(out). Core subunit of the mitochondrial membrane respiratory chain NADH dehydrogenase (Complex I) that is believed to belong to the minimal assembly required for catalysis. Complex I functions in the transfer of electrons from NADH to the respiratory chain. The immediate electron acceptor for the enzyme is believed to be ubiquinone. This Drosophila yakuba (Fruit fly) protein is NADH-ubiquinone oxidoreductase chain 3 (mt:ND3).